A 241-amino-acid chain; its full sequence is Carboxy-S-adenosyl-L-methionine synthase (241 aa).

S-adenosyl-L-methionine is bound by residues Tyr38, 63–65 (GCS), 88–89 (DN), 116–117 (DI), Asn131, and Arg198.

This sequence belongs to the class I-like SAM-binding methyltransferase superfamily. Cx-SAM synthase family. In terms of assembly, homodimer.

It carries out the reaction prephenate + S-adenosyl-L-methionine = carboxy-S-adenosyl-L-methionine + 3-phenylpyruvate + H2O. Its function is as follows. Catalyzes the conversion of S-adenosyl-L-methionine (SAM) to carboxy-S-adenosyl-L-methionine (Cx-SAM). This chain is Carboxy-S-adenosyl-L-methionine synthase, found in Pasteurella multocida (strain Pm70).